Consider the following 276-residue polypeptide: F-actin-capping protein subunit beta (276 aa).

This sequence belongs to the F-actin-capping protein beta subunit family. In terms of assembly, component of the F-actin capping complex, composed of a heterodimer of an alpha and a beta subunit. Subunit of dynactin, a multiprotein complex part of a tripartite complex with dynein and a adapter, such as BICDL1, BICD2 or HOOK3.

Its subcellular location is the cytoplasm. It is found in the cytoskeleton. In terms of biological role, F-actin-capping proteins bind in a Ca(2+)-independent manner to the fast growing ends of actin filaments (barbed end) thereby blocking the exchange of subunits at these ends. Unlike other capping proteins (such as gelsolin and severin), these proteins do not sever actin filaments. Forms, with CAPZB, the barbed end of the fast growing ends of actin filaments in the dynactin complex and stabilizes dynactin structure. The dynactin multiprotein complex activates the molecular motor dynein for ultra-processive transport along microtubules. The sequence is that of F-actin-capping protein subunit beta (cpb) from Drosophila melanogaster (Fruit fly).